The primary structure comprises 101 residues: Large ribosomal subunit protein bL27 (101 aa).

A disordered region spans residues 1–21; sequence MAHKKAGGSSRNGRDSRSKRL.

The protein belongs to the bacterial ribosomal protein bL27 family.

This chain is Large ribosomal subunit protein bL27, found in Buchnera aphidicola subsp. Cinara cedri (strain Cc).